The following is a 428-amino-acid chain: AP-1 complex subunit mu (428 aa).

A2 carries the post-translational modification N-acetylalanine; partial. Positions 169–426 (KNEVFLDVVE…VCLSGDYQFR (258 aa)) constitute an MHD domain.

Belongs to the adaptor complexes medium subunit family. In terms of assembly, adaptor protein complex 1 (AP-1) is a heterotetramer composed of two large adaptins (gamma-type subunit and beta-type subunit), a medium adaptin (mu-type subunit) and a small adaptin (sigma-type subunit).

The protein localises to the golgi apparatus. Its subcellular location is the trans-Golgi network. The protein resides in the cytoplasmic vesicle. It is found in the clathrin-coated vesicle membrane. In terms of biological role, subunit of clathrin-associated adaptor protein complex 1 that plays a role in protein sorting in the trans-Golgi network (TGN) and endosomes. The AP complexes mediate the recruitment of clathrin to membranes and the recognition of sorting signals within the cytosolic tails of transmembrane cargo molecules. Also involved in early steps of phagocytosis and macropinocytosis. The chain is AP-1 complex subunit mu (apm1) from Dictyostelium discoideum (Social amoeba).